Reading from the N-terminus, the 188-residue chain is Protein SYC1 (188 aa).

As to quaternary structure, component of the cleavage and polyadenylation factor (CPF) complex, which is composed of at least PTI1, SYC1, SSU72, GLC7, MPE1, REF2, PFS2, PTA1, YSH1/BRR5, SWD2, CFT2/YDH1, YTH1, CFT1/YHH1, FIP1 and PAP1. Component of the APT complex, which is a subcomplex of CPF, and is composed of PTI1, SYC1, SSU72, GLC7, REF2, PTA1 and SWD2.

It localises to the nucleus. Its function is as follows. Component of the cleavage and polyadenylation factor (CPF) complex, which plays a key role in polyadenylation-dependent pre-mRNA 3'-end formation and cooperates with cleavage factors including the CFIA complex and NAB4/CFIB. Component of the APT complex, which may be involved in polyadenylation-independent transcript 3'-end formation, including snoRNAs and snRNAs. This chain is Protein SYC1 (SYC1), found in Saccharomyces cerevisiae (strain ATCC 204508 / S288c) (Baker's yeast).